The following is a 1019-amino-acid chain: UPF0182 protein Tery_0938 (1019 aa).

The next 9 membrane-spanning stretches (helical) occupy residues 23–43 (IHIL…GFST), 67–87 (TETW…LVNL), 128–148 (LSLS…GLIL), 192–212 (LWLL…PILW), 213–233 (LSVF…SHWA), 270–290 (FWLI…YLLS), 313–333 (LGGG…FELL), 355–375 (YVFL…QAIF), and 416–436 (AILT…PKIV).

This sequence belongs to the UPF0182 family.

The protein resides in the cell membrane. This is UPF0182 protein Tery_0938 from Trichodesmium erythraeum (strain IMS101).